Here is a 79-residue protein sequence, read N- to C-terminus: MLTKINKAIALVFVSLISFYQKWISPLFGPSCRFIPSCSAYGIEAVNKHGPWRGGWLTLKRLSKCHPFTPCGCDPVPEK.

This sequence belongs to the UPF0161 family.

The protein resides in the cell inner membrane. Functionally, could be involved in insertion of integral membrane proteins into the membrane. The sequence is that of Putative membrane protein insertion efficiency factor from Prochlorococcus marinus (strain NATL1A).